A 1157-amino-acid chain; its full sequence is Cell division cycle and apoptosis regulator protein 1 (1157 aa).

Disordered stretches follow at residues Pro-289–Val-365 and Leu-608–Leu-641. Composition is skewed to basic and acidic residues over residues Arg-300–Pro-341 and Glu-348–Pro-359. Residues Lys-601–Glu-625 adopt a coiled-coil conformation. Over residues Gly-617–Asp-628 the composition is skewed to acidic residues. One can recognise an SAP domain in the interval Pro-643–Leu-677. Composition is skewed to basic and acidic residues over residues Glu-685–Lys-694, Glu-701–Arg-721, Glu-804–Asp-824, and Ser-838–Tyr-861. Disordered stretches follow at residues Glu-685–Arg-721 and Glu-804–Lys-926. The span at Arg-862–Asp-896 shows a compositional bias: acidic residues. A compositionally biased stretch (basic and acidic residues) spans Ser-897 to Lys-926. A coiled-coil region spans residues Asp-1043–Leu-1128. Ser-1157 is subject to Phosphoserine.

It is found in the cytoplasm. Its subcellular location is the perinuclear region. In terms of biological role, transcriptional coactivator for nuclear receptors which may play an important role in regulating cell growth and apoptosis. This Xenopus laevis (African clawed frog) protein is Cell division cycle and apoptosis regulator protein 1 (ccar1).